The following is a 768-amino-acid chain: Glucoamylase S2 (768 aa).

A signal peptide spans Met1–Gly21. Disordered stretches follow at residues Arg29–Ile83 and Thr125–Pro149. Low complexity predominate over residues Gly30 to Ser48. Residue Asn35 is glycosylated (N-linked (GlcNAc...) asparagine). Over residues Ala49 to Tyr66 the composition is skewed to polar residues. Low complexity-rich tracts occupy residues Thr71 to Ile83 and Ser131 to Pro149. N-linked (GlcNAc...) asparagine glycans are attached at residues Asn309, Asn323, Asn415, Asn424, and Asn435. Residues Val349–Tyr692 form a h subunit region. Trp456 is a binding site for substrate. Asn514 is a glycosylation site (N-linked (GlcNAc...) asparagine). The Proton acceptor role is filled by Asp519. Catalysis depends on Glu522, which acts as the Proton donor. Residues Asn547, Asn646, Asn651, Asn721, and Asn742 are each glycosylated (N-linked (GlcNAc...) asparagine). The y subunit stretch occupies residues Arg693–Asn768.

The protein belongs to the glycosyl hydrolase 15 family.

The catalysed reaction is Hydrolysis of terminal (1-&gt;4)-linked alpha-D-glucose residues successively from non-reducing ends of the chains with release of beta-D-glucose.. The protein is Glucoamylase S2 (STA2) of Saccharomyces cerevisiae (Baker's yeast).